Reading from the N-terminus, the 157-residue chain is 2-C-methyl-D-erythritol 2,4-cyclodiphosphate synthase (157 aa).

A divalent metal cation contacts are provided by aspartate 9 and histidine 11. Residues 9–11 (DVH) and 35–36 (HS) each bind 4-CDP-2-C-methyl-D-erythritol 2-phosphate. A divalent metal cation is bound at residue histidine 43. Residues 57 to 59 (DIG), 62 to 66 (FPDTD), 101 to 107 (AEKPKMA), 133 to 136 (TTTE), phenylalanine 140, and arginine 143 each bind 4-CDP-2-C-methyl-D-erythritol 2-phosphate.

The protein belongs to the IspF family. In terms of assembly, homotrimer. It depends on a divalent metal cation as a cofactor.

It catalyses the reaction 4-CDP-2-C-methyl-D-erythritol 2-phosphate = 2-C-methyl-D-erythritol 2,4-cyclic diphosphate + CMP. It functions in the pathway isoprenoid biosynthesis; isopentenyl diphosphate biosynthesis via DXP pathway; isopentenyl diphosphate from 1-deoxy-D-xylulose 5-phosphate: step 4/6. Its function is as follows. Involved in the biosynthesis of isopentenyl diphosphate (IPP) and dimethylallyl diphosphate (DMAPP), two major building blocks of isoprenoid compounds. Catalyzes the conversion of 4-diphosphocytidyl-2-C-methyl-D-erythritol 2-phosphate (CDP-ME2P) to 2-C-methyl-D-erythritol 2,4-cyclodiphosphate (ME-CPP) with a corresponding release of cytidine 5-monophosphate (CMP). The sequence is that of 2-C-methyl-D-erythritol 2,4-cyclodiphosphate synthase from Listeria monocytogenes serotype 4a (strain HCC23).